Consider the following 561-residue polypeptide: Carboxylesterase 1E (561 aa).

Residues 1–18 (MCLYALILVFLAAFTAGG) form the signal peptide. N-linked (GlcNAc...) asparagine glycosylation is found at Asn79 and Asn107. A disulfide bond links Cys87 and Cys116. Residue Ser221 is the Acyl-ester intermediate of the active site. Cys273 and Cys284 are oxidised to a cystine. Active-site charge relay system residues include Glu353 and His466. The N-linked (GlcNAc...) asparagine glycan is linked to Asn489. The Prevents secretion from ER signature appears at 558-561 (HTEL).

This sequence belongs to the type-B carboxylesterase/lipase family. As to expression, expressed in liver.

The protein localises to the endoplasmic reticulum lumen. It is found in the microsome membrane. It carries out the reaction a carboxylic ester + H2O = an alcohol + a carboxylate + H(+). It catalyses the reaction all-trans-retinyl hexadecanoate + H2O = all-trans-retinol + hexadecanoate + H(+). In terms of biological role, involved in the detoxification of xenobiotics and in the activation of ester and amide prodrugs. Hydrolyzes retinyl esters. This chain is Carboxylesterase 1E (Ces1e), found in Rattus norvegicus (Rat).